Consider the following 87-residue polypeptide: MSRSSKKGAFVDAHLLKKVIEMNKQAKKKPIKTWSRRSTIFPEFVGNTFSVHNGKTFINVYVTDDMVGHKLGEFSPTRNFKQHTANR.

Belongs to the universal ribosomal protein uS19 family.

Its function is as follows. Protein S19 forms a complex with S13 that binds strongly to the 16S ribosomal RNA. This Mycoplasma genitalium (strain ATCC 33530 / DSM 19775 / NCTC 10195 / G37) (Mycoplasmoides genitalium) protein is Small ribosomal subunit protein uS19 (rpsS).